Consider the following 431-residue polypeptide: Beta-lactamase hydrolase-like protein (431 aa).

Zn(2+)-binding residues include His-212, His-214, and His-286. Residue Asp-309 participates in substrate binding.

The protein belongs to the metallo-beta-lactamase superfamily. Zn(2+) serves as cofactor.

Its function is as follows. Could play a role in cell adherence or biofilm development. This is Beta-lactamase hydrolase-like protein from Xylella fastidiosa (strain 9a5c).